Here is a 360-residue protein sequence, read N- to C-terminus: Probable neutral protease 2 homolog MCYG_04257 (360 aa).

Positions 1–17 are cleaved as a signal peptide; sequence MQLIAFLAALGVPVAFA. A propeptide spanning residues 18 to 182 is cleaved from the precursor; that stretch reads ATIPSVPLNH…KVKAGSIDKR (165 aa). A disulfide bond links cysteine 190 and cysteine 261. N-linked (GlcNAc...) asparagine glycosylation is present at asparagine 262. Intrachain disulfides connect cysteine 268-cysteine 286 and cysteine 300-cysteine 360. Histidine 311 is a binding site for Zn(2+). Glutamate 312 is a catalytic residue. Zn(2+)-binding residues include histidine 315 and aspartate 326.

This sequence belongs to the peptidase M35 family. Zn(2+) serves as cofactor.

It is found in the secreted. The enzyme catalyses Preferential cleavage of bonds with hydrophobic residues in P1'. Also 3-Asn-|-Gln-4 and 8-Gly-|-Ser-9 bonds in insulin B chain.. Its function is as follows. Probable secreted metalloprotease that shows high activities on basic nuclear substrates such as histone and protamine. May be involved in virulence. The chain is Probable neutral protease 2 homolog MCYG_04257 from Arthroderma otae (strain ATCC MYA-4605 / CBS 113480) (Microsporum canis).